The primary structure comprises 753 residues: 5-methyltetrahydropteroyltriglutamate--homocysteine methyltransferase (753 aa).

5-methyltetrahydropteroyltri-L-glutamate contacts are provided by residues 17–20 (RELK) and K117. Residues 431-433 (IGS) and E484 contribute to the L-homocysteine site. Residues 431–433 (IGS) and E484 contribute to the L-methionine site. Residues 515 to 516 (RC) and W561 each bind 5-methyltetrahydropteroyltri-L-glutamate. D599 contributes to the L-homocysteine binding site. L-methionine is bound at residue D599. Position 605 (E605) interacts with 5-methyltetrahydropteroyltri-L-glutamate. Residues H641, C643, and E665 each coordinate Zn(2+). Catalysis depends on H694, which acts as the Proton donor. C726 contributes to the Zn(2+) binding site.

It belongs to the vitamin-B12 independent methionine synthase family. It depends on Zn(2+) as a cofactor.

It catalyses the reaction 5-methyltetrahydropteroyltri-L-glutamate + L-homocysteine = tetrahydropteroyltri-L-glutamate + L-methionine. Its pathway is amino-acid biosynthesis; L-methionine biosynthesis via de novo pathway; L-methionine from L-homocysteine (MetE route): step 1/1. Its function is as follows. Catalyzes the transfer of a methyl group from 5-methyltetrahydrofolate to homocysteine resulting in methionine formation. The chain is 5-methyltetrahydropteroyltriglutamate--homocysteine methyltransferase from Shigella boydii serotype 18 (strain CDC 3083-94 / BS512).